Consider the following 207-residue polypeptide: Outer-membrane lipoprotein LolB (207 aa).

The first 21 residues, 1-21, serve as a signal peptide directing secretion; that stretch reads MTLPDFRLIRLLPLASLVLTA. Cysteine 22 carries the N-palmitoyl cysteine lipid modification. A lipid anchor (S-diacylglycerol cysteine) is attached at cysteine 22.

It belongs to the LolB family. In terms of assembly, monomer.

The protein localises to the cell outer membrane. Functionally, plays a critical role in the incorporation of lipoproteins in the outer membrane after they are released by the LolA protein. The polypeptide is Outer-membrane lipoprotein LolB (Salmonella agona (strain SL483)).